The primary structure comprises 314 residues: Ribosomal protein L11 methyltransferase (314 aa).

4 residues coordinate S-adenosyl-L-methionine: Thr-164, Gly-185, Asp-207, and Asn-249.

It belongs to the methyltransferase superfamily. PrmA family.

It is found in the cytoplasm. It carries out the reaction L-lysyl-[protein] + 3 S-adenosyl-L-methionine = N(6),N(6),N(6)-trimethyl-L-lysyl-[protein] + 3 S-adenosyl-L-homocysteine + 3 H(+). In terms of biological role, methylates ribosomal protein L11. The sequence is that of Ribosomal protein L11 methyltransferase from Clostridium beijerinckii (strain ATCC 51743 / NCIMB 8052) (Clostridium acetobutylicum).